A 353-amino-acid chain; its full sequence is MAFRIASSPYTHNRRSTSRIMLLVLIATLPGIAAQWYYFGWGNIIQVLIASVAALVAEAAILHLRKQPLAETLKDNSALLTALLLGVSIPSLAPWWMVTIGTVFAIIISKQLYGGLGQNPFNPAMVGYVVLVISFPVQMTSWLPPVGLQGITPSFADTLSMIFHLHTLDGHTMQQLQVGIDGISQATPLDHFKTGLRAGHSAEQLLAQPTYSGVIAGIGWQWVNVGFLLGGVFLLFTRCIRWHIPVSFIASLAFFATLGWLLSPQSLVTPMIHLFSGATMLGAFFIATDPVTASTTNKGRLLYGVLIGLLTWLIRSYGGYPDGLAFAVLLANICVPLIDYYTQPRVYGHRKGK.

Transmembrane regions (helical) follow at residues 20–40 (IMLL…YYFG), 44–64 (IIQV…ILHL), 77–108 (SALL…AIII), and 123–143 (PAMV…TSWL). FMN phosphoryl threonine is present on Thr187. 4 helical membrane-spanning segments follow: residues 214–234 (VIAG…GVFL), 242–262 (WHIP…GWLL), 267–287 (LVTP…FFIA), and 301–318 (LLYG…RSYG).

Belongs to the NqrB/RnfD family. The complex is composed of six subunits: RnfA, RnfB, RnfC, RnfD, RnfE and RnfG. FMN serves as cofactor.

It is found in the cell inner membrane. Functionally, part of a membrane-bound complex that couples electron transfer with translocation of ions across the membrane. The chain is Ion-translocating oxidoreductase complex subunit D from Erwinia tasmaniensis (strain DSM 17950 / CFBP 7177 / CIP 109463 / NCPPB 4357 / Et1/99).